Here is a 1042-residue protein sequence, read N- to C-terminus: Glutamate dehydrogenase 2 (1042 aa).

K596 is a catalytic residue. Position 763 is an ADP-ribosylarginine; by Legionella Lart1 (R763).

It belongs to the Glu/Leu/Phe/Val dehydrogenases family. As to quaternary structure, homodimer. (Microbial infection) ADP-ribosylated at Arg-763 by the Legionella pneumophila effector Lart1, which inhibits the glutamate dehydrogenase activity. Amoeba are natural hosts of Legionella, and ADP-ribosylation by Lart1 may promote Legionella parasitism.

It localises to the cytoplasm. It carries out the reaction L-glutamate + NAD(+) + H2O = 2-oxoglutarate + NH4(+) + NADH + H(+). Activity is stimulated by AMP. Its activity is regulated as follows. (Microbial infection) Inhibited by ADP-ribosylation. This Dictyostelium discoideum (Social amoeba) protein is Glutamate dehydrogenase 2 (glud2).